An 88-amino-acid polypeptide reads, in one-letter code: Small ribosomal subunit protein bS20 (88 aa).

A disordered region spans residues 1 to 25; sequence MANSAQARKRARQAVAQNAHNSSLR.

It belongs to the bacterial ribosomal protein bS20 family.

Functionally, binds directly to 16S ribosomal RNA. This is Small ribosomal subunit protein bS20 from Cupriavidus pinatubonensis (strain JMP 134 / LMG 1197) (Cupriavidus necator (strain JMP 134)).